A 446-amino-acid polypeptide reads, in one-letter code: MSIQIKQSTMVRPAEETPNKSLWLSKIDMILRTPYSHTGAVLIYKQPDNNEDNIHPSSSMYFDANILIEALSKALVPYYPMAGRLKINGDRYEIDCNAEGALFVEAESSHVLEDFGDFRPNDELHRVMVPTCDYSKGISSFPLLMVQLTRFRCGGVSIGFAQHHHACDGMSHFEFNNSWARIAKGLLPALEPVHDRYLHLRLRNPPQIKYTHSQFEPFVPSLPNELLDGKTNKSQTLFKLSREQINTLKQKLDLSSNTTTRLSTYEVVAGHVWRSVSKARGLSDHEEIKLIMPVDGRSRINNPSLPKGYCGNVVFLAVCTATVGDLSCNPLTDTAGKVQEALKGLDDDYLRSAIDHTESKPDLPVPYMGSPEKTLYPNVLVNSWGRIPYQAMDFGWGSPTFFGISNIFYDGQCFLIPSQNGDGSMTLAINLFSSHLSLFKKYFYDF.

Active-site proton acceptor residues include His164 and Asp393.

Belongs to the plant acyltransferase family. In terms of processing, N-terminus is blocked.

The catalysed reaction is anthranilate + benzoyl-CoA = N-benzoylanthranilate + CoA. It participates in phytoalexin biosynthesis; methoxydianthramide B biosynthesis. Functionally, catalyzes the formation of N-benzoylanthranilate, in the course of methoxydianthramide B, a phytoalexin. Phytoalexins are produced in response to infection by parasites, and are essential for the expression of disease resistance. This is Anthranilate N-benzoyltransferase protein 2 (HCBT2) from Dianthus caryophyllus (Carnation).